The primary structure comprises 582 residues: Ubiquilin-1 (582 aa).

Disordered regions lie at residues 1–26 (MAES…AEPK) and 102–136 (RPQD…AANS). At Ala-2 the chain carries N-acetylalanine. In terms of domain architecture, Ubiquitin-like spans 28 to 102 (MKVTVKTPKE…VHLVIKTQNR (75 aa)). The span at 102-135 (RPQDNSAQQTNTTGNSVTSSPAPDSNPTSGPAAN) shows a compositional bias: polar residues. The segment at 169–422 (QLLSNPEMMV…LNNPLFAGNP (254 aa)) is interaction with UBXN4. STI1 domains are found at residues 173-201 (NPEM…QLIM) and 203-242 (NPQM…MQEM). A disordered region spans residues 285–365 (NPFASLVSSP…NLVPGAGASM (81 aa)). The segment covering 290-304 (LVSSPSSAEGTQPSR) has biased composition (polar residues). Residues 318–346 (QTPQSSPASGSTGSTTNTVSTSAGNATST) show a composition bias toward low complexity. 2 consecutive STI1 domains span residues 381–428 (NPQL…QEQM) and 432–464 (LPTF…QQGL). A disordered region spans residues 481 to 513 (GLAAGNSGGPAGTTAPSTAPGEDTNPQGGAAEP). Residues 539–579 (RFQQQLEQLSAMGFLNREANLQALIATGGDINAAIERLLGS) form the UBA domain.

In terms of assembly, monomer and homodimer. Heterodimer with UBQLN2. Binds CD47. Binds NBL1. Binds GABRA1, GABRA2, GABRA3, GABRA6, GABRB1, GABRB2 and GABRB3. Binds UBE3A, BTRC, P4HB and MTOR. Interacts with the proteasome 19S subunit. Interacts (via ubiquitin-like domain) with TREX1; the interaction is direct and may control TREX1 subcellular location. Forms a complex with UBXN4 and VCP. Interacts (via UBA domain) with UBQLN4 (via ubiquitin-like domain). Found in a complex with UBQLN2 and MAP1LC3A/B/C. The monomeric form interacts with PSEN1 and PSEN2. Interacts with ORAI1. Interacts (via UBA domain) with TICAM1. Interacts with EPS15. Interacts (via UBA domain) with UBA52 and (via ubiquitin-like domain) with PSMD3 and PSMD4. Interacts with HERPUD1. Interacts with MAP1LC3A/B/C in the presence of UBQLN4. Interacts (via ubiquitin-like domain) with EPS15 (via UIM domains) and both the ubiquitinated and non-ubiquitinated forms can interact with EPS15. Interacts (via ubiquitin-like domain) with EPS15L1, HGS (via UIM domain) and STAM2 (via UIM domain). Interacts with BCL2L10/BCL-B; in the cytoplasm. Degraded during both macroautophagy and during chaperone-mediated autophagy (CMA). Post-translationally, phosphorylated. In terms of processing, ubiquitinated.

It localises to the nucleus. Its subcellular location is the cytoplasm. It is found in the endoplasmic reticulum. The protein localises to the cytoplasmic vesicle. The protein resides in the autophagosome. It localises to the cell membrane. Functionally, plays an important role in the regulation of different protein degradation mechanisms and pathways including ubiquitin-proteasome system (UPS), autophagy and endoplasmic reticulum-associated protein degradation (ERAD) pathway. Mediates the proteasomal targeting of misfolded or accumulated proteins for degradation by binding (via UBA domain) to their polyubiquitin chains and by interacting (via ubiquitin-like domain) with the subunits of the proteasome. Plays a role in the ERAD pathway via its interaction with ER-localized proteins UBXN4, VCP and HERPUD1 and may form a link between the polyubiquitinated ERAD substrates and the proteasome. Plays a role in unfolded protein response (UPR) by attenuating the induction of UPR-inducible genes, DDTI3/CHOP, HSPA5 and PDIA2 during ER stress. Involved in the regulation of macroautophagy and autophagosome formation; required for maturation of autophagy-related protein LC3 from the cytosolic form LC3-I to the membrane-bound form LC3-II and may assist in the maturation of autophagosomes to autolysosomes by mediating autophagosome-lysosome fusion. Negatively regulates the TICAM1/TRIF-dependent toll-like receptor signaling pathway by decreasing the abundance of TICAM1 via the autophagic pathway. Promotes the ubiquitination and lysosomal degradation of ORAI1, consequently down-regulating the ORAI1-mediated Ca2+ mobilization. Suppresses the maturation and proteasomal degradation of amyloid beta A4 protein (A4) by stimulating the lysine 63 (K63)-linked polyubiquitination. Delays the maturation of A4 by sequestering it in the Golgi apparatus and preventing its transport to the cell surface for subsequent processing. Promotes the surface expression of GABA-A receptors. Ubiquitinates BCL2L10 and thereby stabilizes protein abundance. In Rattus norvegicus (Rat), this protein is Ubiquilin-1 (Ubqln1).